The primary structure comprises 286 residues: Interferon-induced 35 kDa protein homolog (286 aa).

Residues 5–26 (LQTVLYSLQEEQARLKMRLQEL) form a leucine-zipper region. NID domains lie at 81-170 (ALVT…GDVE) and 183-266 (FADE…GEVE).

Belongs to the NMI family. In terms of assembly, homodimer. Also interacts with B-ATF. Interacts with TRIM21. Interacts (via NID domains) with NMI (via NID domains); the interaction is direct and is facilitated by TRIM21. In terms of processing, phosphorylated. Dephosphorylation correlates with the formation of a complex with NMI.

The protein resides in the cytoplasm. It localises to the nucleus. It is found in the secreted. Functionally, acts as a signaling pathway regulator involved in innate immune system response. In response to interferon IFN-alpha, associates in a complex with transcriptional regulator NMI to regulate immune response; the complex formation prevents proteasome-mediated degradation of IFI35 and correlates with IFI35 dephosphorylation. In complex with NMI, inhibits virus-triggered type I interferon/IFN-beta production. In complex with NMI, negatively regulates nuclear factor NF-kappa-B signaling by inhibiting the nuclear translocation, activation and transcription of the NF-kappa-B subunit p65/RELA, resulting in the inhibition of endothelial cell proliferation, migration and re-endothelialization of injured arteries. Beside its role as an intracellular signaling pathway regulator, also functions extracellularly as damage-associated molecular patterns (DAMPs) to promote inflammation when actively released by macrophage to the extracellular space during cell injury and pathogen invasion. Macrophage-secreted IFI35 activates NF-kappa-B signaling in adjacent macrophages through Toll-like receptor 4/TLR4 activation, thereby inducing NF-kappa-B translocation from the cytoplasm into the nucleus which promotes the release of pro-inflammatory cytokines. The polypeptide is Interferon-induced 35 kDa protein homolog (Mus musculus (Mouse)).